We begin with the raw amino-acid sequence, 404 residues long: Cysteine desulfurase IscS (404 aa).

Residues 75 to 76 (AT), Asn155, Gln183, and 203 to 205 (SGH) each bind pyridoxal 5'-phosphate. Lys206 bears the N6-(pyridoxal phosphate)lysine mark. Thr243 contributes to the pyridoxal 5'-phosphate binding site. Catalysis depends on Cys328, which acts as the Cysteine persulfide intermediate. A [2Fe-2S] cluster-binding site is contributed by Cys328.

It belongs to the class-V pyridoxal-phosphate-dependent aminotransferase family. NifS/IscS subfamily. In terms of assembly, homodimer. Forms a heterotetramer with IscU, interacts with other sulfur acceptors. Pyridoxal 5'-phosphate serves as cofactor.

The protein localises to the cytoplasm. It carries out the reaction (sulfur carrier)-H + L-cysteine = (sulfur carrier)-SH + L-alanine. Its pathway is cofactor biosynthesis; iron-sulfur cluster biosynthesis. In terms of biological role, master enzyme that delivers sulfur to a number of partners involved in Fe-S cluster assembly, tRNA modification or cofactor biosynthesis. Catalyzes the removal of elemental sulfur atoms from cysteine to produce alanine. Functions as a sulfur delivery protein for Fe-S cluster synthesis onto IscU, an Fe-S scaffold assembly protein, as well as other S acceptor proteins. The polypeptide is Cysteine desulfurase IscS (Shewanella frigidimarina (strain NCIMB 400)).